Reading from the N-terminus, the 809-residue chain is WASP homolog-associated protein with actin, membranes and microtubules (809 aa).

The segment at Met1–Ile260 is mediates association with membranes. The tract at residues Leu261–Ser630 is mediates interaction with microtubules. Coiled-coil stretches lie at residues Pro271–Ile298, Glu384–Arg479, and Ser512–Leu542. Disordered regions lie at residues Tyr506 to Lys528, Lys546 to Leu571, Ile586 to Cys612, and Gln627 to Pro707. Over residues Met515–Lys528 the composition is skewed to basic and acidic residues. Ser606 is subject to Phosphoserine. The interval Lys631 to Gly809 is mediates actin nucleation. Over residues Leu638–Leu659 the composition is skewed to pro residues. Residues Leu662–Asn673 are compositionally biased toward polar residues. 2 consecutive WH2 domains span residues Ser709–Val727 and Ile739–Val756. The disordered stretch occupies residues Lys754–Gly809. A compositionally biased stretch (polar residues) spans Asn763–Arg772. Residues Ser770–Glu797 adopt a coiled-coil conformation. Positions Asp794–Asp803 are enriched in acidic residues. Ser795 carries the phosphoserine modification.

Interacts with ACTR3; indicative for an association with the ARP2/3 complex. Associates with microtubules; in vitro binds to tubulin heterodimer in a 1:1 stoichiometry; decorates microtubules with a repeat of 80 A along protofilaments. Interacts with RHOD (in GTP-bound form). In terms of tissue distribution, expressed in brain, lung, heart, colon and kidney (at protein level).

The protein localises to the cytoplasm. It is found in the endoplasmic reticulum-Golgi intermediate compartment. The protein resides in the cytoplasmic vesicle membrane. It localises to the golgi apparatus. Its subcellular location is the cis-Golgi network. In terms of biological role, acts as a nucleation-promoting factor (NPF) that stimulates Arp2/3-mediated actin polymerization both at the Golgi apparatus and along tubular membranes. Its activity in membrane tubulation requires F-actin and interaction with microtubules. Proposed to use coordinated actin-nucleating and microtubule-binding activities of distinct WHAMM molecules to drive membrane tubule elongation; when MT-bound can recruit and remodel membrane vesicles but is prevented to activate the Arp2/3 complex. Involved as a regulator of Golgi positioning and morphology. Participates in vesicle transport between the reticulum endoplasmic and the Golgi complex. Required for RhoD-dependent actin reorganization such as in cell adhesion and cell migration. The protein is WASP homolog-associated protein with actin, membranes and microtubules (WHAMM) of Homo sapiens (Human).